Reading from the N-terminus, the 602-residue chain is Beta-(1--&gt;2)glucan export ATP-binding/permease protein NdvA (602 aa).

Residues 21-306 enclose the ABC transmembrane type-1 domain; that stretch reads GWLLAFANLL…VVSFINNVFM (286 aa). 6 helical membrane passes run 22 to 42, 63 to 83, 141 to 161, 163 to 183, 240 to 262, and 280 to 300; these read WLLAFANLLLAASQFAEPVLF, FLAAWVAFGLFTIACSALVAL, EHFAAILSVVVLLPLSLYLNW, LAILLFVLCIVFTALTTFVVR, VLSWWALVTVITRASTTITVLAI, and IVMFVSFATLLIQKLEQVVSF. In terms of domain architecture, ABC transporter spans 340–573; sequence VEFNDVTFSY…GGHFAELARA (234 aa). ATP is bound at residue 373 to 380; the sequence is GPTGAGKS.

The protein belongs to the ABC transporter superfamily. Beta-(1--&gt;2)glucan exporter (TC 3.A.1.108.1) family. In terms of assembly, homodimer.

It is found in the cell inner membrane. It carries out the reaction [(1-&gt;2)-beta-D-glucosyl](n)(in) + ATP + H2O = [(1-&gt;2)-beta-D-glucosyl](n)(out) + ADP + phosphate + H(+). In terms of biological role, involved in beta-(1--&gt;2)glucan export. Transmembrane domains (TMD) form a pore in the inner membrane and the ATP-binding domain (NBD) is responsible for energy generation. The sequence is that of Beta-(1--&gt;2)glucan export ATP-binding/permease protein NdvA from Bradyrhizobium diazoefficiens (strain JCM 10833 / BCRC 13528 / IAM 13628 / NBRC 14792 / USDA 110).